A 1011-amino-acid chain; its full sequence is Probable calcium-transporting ATPase (1011 aa).

The Cytoplasmic portion of the chain corresponds to 1 to 65 (MLPENLPTDP…WKLVLAQFED (65 aa)). The helical transmembrane segment at 66–84 (TLVRILLLAATVSFAMAVV) threads the bilayer. Residues 85–90 (ENNAAD) are Extracellular-facing. A helical membrane pass occupies residues 91 to 110 (FVEPFIILLILILNATVGVW). The Cytoplasmic portion of the chain corresponds to 111–258 (QENRAEGAIE…QVKLDEFGVL (148 aa)). The chain crosses the membrane as a helical span at residues 259–278 (LSKVIGYICLVVFAVNLVRW). Residues 279-303 (YATHKPTKNETFFTRYIQPSVHCLK) are Extracellular-facing. Residues 304 to 321 (VAVALAVAAIPEGLPAVV) form a helical membrane-spanning segment. Topologically, residues 322 to 770 (TTCLALGTRR…RYLISSNIGE (449 aa)) are cytoplasmic. Asp357 acts as the 4-aspartylphosphate intermediate in catalysis. ATP is bound at residue Lys514. Residues 771–794 (VVCILVTGLFGLPEALSPVQLLWV) traverse the membrane as a helical segment. Residues 795 to 835 (NLVTDGLPATALGFNAPDRDIMEQRPRRMEEPIVNGWLFMR) lie on the Extracellular side of the membrane. Residues 836-856 (YMVIGVYVGLATVGGFLWWFL) form a helical membrane-spanning segment. Residues 857–885 (RHGFSWHDLTTYTACSDMTNGTCLLLANP) lie on the Cytoplasmic side of the membrane. Residues 886-905 (QTARAIALSILVVVEMLNAL) traverse the membrane as a helical segment. Residues 906 to 922 (NALSENASLIVSRPSSN) are Extracellular-facing. A helical membrane pass occupies residues 923–942 (VWLLFAIFSSLSLHLIIMYV). Topologically, residues 943-1011 (PFFAKLFNIV…MEKAQEKKKD (69 aa)) are cytoplasmic.

This sequence belongs to the cation transport ATPase (P-type) (TC 3.A.3) family.

The protein localises to the flagellar pocket. The protein resides in the cell membrane. It catalyses the reaction Ca(2+)(in) + ATP + H2O = Ca(2+)(out) + ADP + phosphate + H(+). Its function is as follows. This magnesium-dependent enzyme catalyzes the hydrolysis of ATP coupled with the transport of the calcium. The chain is Probable calcium-transporting ATPase (TBA1) from Trypanosoma brucei brucei.